The following is a 158-amino-acid chain: Large ribosomal subunit protein uL16 (158 aa).

The disordered stretch occupies residues 1 to 22; that stretch reads MLSPKRTKYRKQQRGRMKGKAT.

Belongs to the universal ribosomal protein uL16 family. In terms of assembly, part of the 50S ribosomal subunit.

Its function is as follows. Binds 23S rRNA and is also seen to make contacts with the A and possibly P site tRNAs. The chain is Large ribosomal subunit protein uL16 from Synechococcus sp. (strain JA-3-3Ab) (Cyanobacteria bacterium Yellowstone A-Prime).